Reading from the N-terminus, the 225-residue chain is MRLTPKELDKLMLHYAGALAKSRKERGIKLNYVESIALISMEIMELAREGNKSVAELMQQGREILKADEVMEGVASMVNEVQVEVSFPDGTKLVTIHNPIEDNGKLTPGEYILKDEDITLNANKESISIKVTHKGDRPIQVGSHFHFFEVNALLEFDRAQAFGKRLDIASGTSVRFEPGEEKNVNLIDFGGKQKIIGFNDLTNAHINKENKEQCLANAAQKHFIH.

The interval 1–102 (MRLTPKELDK…LVTIHNPIED (102 aa)) is urease gamma. The interval 103 to 225 (NGKLTPGEYI…ANAAQKHFIH (123 aa)) is urease beta.

In the N-terminal section; belongs to the urease gamma subunit family. It in the C-terminal section; belongs to the urease beta subunit family. As to quaternary structure, heterohexamer of 3 UreA (alpha) and 3 UreB (beta) subunits.

Its subcellular location is the cytoplasm. It carries out the reaction urea + 2 H2O + H(+) = hydrogencarbonate + 2 NH4(+). It functions in the pathway nitrogen metabolism; urea degradation; CO(2) and NH(3) from urea (urease route): step 1/1. The polypeptide is Urease subunit alpha (Helicobacter hepaticus (strain ATCC 51449 / 3B1)).